A 149-amino-acid chain; its full sequence is Major outer capsid protein (149 aa).

In terms of assembly, homotrimer.

It localises to the virion. Assembles to form an icosahedral capsid with a T=13 symmetry. Drives the penetration of the inner capsid (core) into the cytoplasm. This is Major outer capsid protein (P8) from Pseudomonas phage phi6 (Bacteriophage phi-6).